Consider the following 269-residue polypeptide: dITP/XTP pyrophosphatase (269 aa).

Residue 22 to 27 (SNNAHK) participates in substrate binding. Asp82 serves as the catalytic Proton acceptor. Asp82 provides a ligand contact to Mg(2+). Residues Ser83, 165 to 168 (FGYD), Lys188, and 193 to 194 (HR) each bind substrate.

This sequence belongs to the HAM1 NTPase family. As to quaternary structure, homodimer. It depends on Mg(2+) as a cofactor.

The catalysed reaction is XTP + H2O = XMP + diphosphate + H(+). It carries out the reaction dITP + H2O = dIMP + diphosphate + H(+). The enzyme catalyses ITP + H2O = IMP + diphosphate + H(+). Pyrophosphatase that catalyzes the hydrolysis of nucleoside triphosphates to their monophosphate derivatives, with a high preference for the non-canonical purine nucleotides XTP (xanthosine triphosphate), dITP (deoxyinosine triphosphate) and ITP. Seems to function as a house-cleaning enzyme that removes non-canonical purine nucleotides from the nucleotide pool, thus preventing their incorporation into DNA/RNA and avoiding chromosomal lesions. The chain is dITP/XTP pyrophosphatase from Treponema pallidum (strain Nichols).